The following is a 245-amino-acid chain: UPF0328 protein ECU09_2010 (245 aa).

It belongs to the UPF0328 family.

The protein is UPF0328 protein ECU09_2010 of Encephalitozoon cuniculi (strain GB-M1) (Microsporidian parasite).